Consider the following 386-residue polypeptide: Phosphoglycerate kinase (386 aa).

Substrate is bound by residues aspartate 21–asparagine 23, arginine 36, histidine 59–arginine 62, arginine 113, and arginine 146. ATP is bound by residues lysine 197, glutamate 314, and glycine 340–threonine 343.

This sequence belongs to the phosphoglycerate kinase family. In terms of assembly, monomer.

The protein localises to the cytoplasm. The enzyme catalyses (2R)-3-phosphoglycerate + ATP = (2R)-3-phospho-glyceroyl phosphate + ADP. The protein operates within carbohydrate degradation; glycolysis; pyruvate from D-glyceraldehyde 3-phosphate: step 2/5. In Marinobacter nauticus (strain ATCC 700491 / DSM 11845 / VT8) (Marinobacter aquaeolei), this protein is Phosphoglycerate kinase.